A 254-amino-acid chain; its full sequence is MLKIGDTEFTSRLFTGTGKFANDKNMLAAIGASNSELVTLAVKRLDLKTGSDNILKPLQQRRVKLLPNTAGARNVKEAIFAAHLSREMLGTNWIKLEIHPDPKYLMPDPIETLAAARILCEQGYVVLPYVHADPVLCRRLEEVGCAAVMPLGSPIGSNQGLATEPFLKIIIEQSQVPVVIDAGIGAPSQATRAMELGADAVLVNTAIASSADPVAMGRCFAQAVDTGRAAFIAGLGNVSEQANSTSPLTGFLNV.

The active-site Schiff-base intermediate with DXP is the K95. Residues G156, 182 to 183 (AG), and 204 to 205 (NT) contribute to the 1-deoxy-D-xylulose 5-phosphate site.

Belongs to the ThiG family. In terms of assembly, homotetramer. Forms heterodimers with either ThiH or ThiS.

Its subcellular location is the cytoplasm. The catalysed reaction is [ThiS sulfur-carrier protein]-C-terminal-Gly-aminoethanethioate + 2-iminoacetate + 1-deoxy-D-xylulose 5-phosphate = [ThiS sulfur-carrier protein]-C-terminal Gly-Gly + 2-[(2R,5Z)-2-carboxy-4-methylthiazol-5(2H)-ylidene]ethyl phosphate + 2 H2O + H(+). Its pathway is cofactor biosynthesis; thiamine diphosphate biosynthesis. In terms of biological role, catalyzes the rearrangement of 1-deoxy-D-xylulose 5-phosphate (DXP) to produce the thiazole phosphate moiety of thiamine. Sulfur is provided by the thiocarboxylate moiety of the carrier protein ThiS. In vitro, sulfur can be provided by H(2)S. The sequence is that of Thiazole synthase from Shewanella piezotolerans (strain WP3 / JCM 13877).